The sequence spans 264 residues: 3-methyl-2-oxobutanoate hydroxymethyltransferase (264 aa).

2 residues coordinate Mg(2+): Asp45 and Asp84. 3-methyl-2-oxobutanoate is bound by residues 45-46, Asp84, and Lys112; that span reads DS. Mg(2+) is bound at residue Glu114. Residue Glu181 is the Proton acceptor of the active site.

It belongs to the PanB family. Homodecamer; pentamer of dimers. The cofactor is Mg(2+).

The protein localises to the cytoplasm. It catalyses the reaction 3-methyl-2-oxobutanoate + (6R)-5,10-methylene-5,6,7,8-tetrahydrofolate + H2O = 2-dehydropantoate + (6S)-5,6,7,8-tetrahydrofolate. The protein operates within cofactor biosynthesis; (R)-pantothenate biosynthesis; (R)-pantoate from 3-methyl-2-oxobutanoate: step 1/2. Its function is as follows. Catalyzes the reversible reaction in which hydroxymethyl group from 5,10-methylenetetrahydrofolate is transferred onto alpha-ketoisovalerate to form ketopantoate. The chain is 3-methyl-2-oxobutanoate hydroxymethyltransferase from Vibrio atlanticus (strain LGP32) (Vibrio splendidus (strain Mel32)).